A 200-amino-acid chain; its full sequence is Putative pseudouridine methyltransferase (200 aa).

The S-adenosyl-L-methionine site is built by Met133 and Cys187.

The protein belongs to the methyltransferase superfamily. TrmY family.

It localises to the cytoplasm. The protein is Putative pseudouridine methyltransferase of Alcanivorax borkumensis (strain ATCC 700651 / DSM 11573 / NCIMB 13689 / SK2).